A 983-amino-acid chain; its full sequence is Nitrate reductase [NADPH] (983 aa).

Low complexity-rich tracts occupy residues 1–14 and 26–48; these read MTIS…SSKT and SSSS…SSPT. Residues 1 to 50 form a disordered region; it reads MTISTTSSSTSSKTSSEKGDDLKGFSSSSSPASSRSSSATTPEPSSPTVL. C184 provides a ligand contact to Mo-molybdopterin. Residues 585–662 form the Cytochrome b5 heme-binding domain; it reads DTIITAADLA…LRDFHLGRLE (78 aa). Residues H622 and H645 each coordinate heme. Positions 688-815 constitute an FAD-binding FR-type domain; the sequence is KKWRATRLVS…KGPLGSFTYL (128 aa). Residues 746-749, 763-767, F768, F780, 784-786, S841, and T844 contribute to the FAD site; these read RAYT, LIKVY, and KMT. 952-961 lines the NADP(+) pocket; that stretch reads LALVCGPPPM.

It belongs to the nitrate reductase family. In terms of assembly, homodimer. The cofactor is FAD. Heme is required as a cofactor. Requires Mo-molybdopterin as cofactor.

It catalyses the reaction nitrite + NADP(+) + H2O = nitrate + NADPH + H(+). It functions in the pathway nitrogen metabolism; nitrate reduction (assimilation). Its function is as follows. Nitrate reductase is a key enzyme involved in the first step of nitrate assimilation in plants, fungi and bacteria. The protein is Nitrate reductase [NADPH] (NAR1) of Mycosarcoma maydis (Corn smut fungus).